Here is a 351-residue protein sequence, read N- to C-terminus: UDP-3-O-acylglucosamine N-acyltransferase (351 aa).

His-240 (proton acceptor) is an active-site residue.

Belongs to the transferase hexapeptide repeat family. LpxD subfamily. As to quaternary structure, homotrimer.

It carries out the reaction a UDP-3-O-[(3R)-3-hydroxyacyl]-alpha-D-glucosamine + a (3R)-hydroxyacyl-[ACP] = a UDP-2-N,3-O-bis[(3R)-3-hydroxyacyl]-alpha-D-glucosamine + holo-[ACP] + H(+). Its pathway is bacterial outer membrane biogenesis; LPS lipid A biosynthesis. Functionally, catalyzes the N-acylation of UDP-3-O-acylglucosamine using 3-hydroxyacyl-ACP as the acyl donor. Is involved in the biosynthesis of lipid A, a phosphorylated glycolipid that anchors the lipopolysaccharide to the outer membrane of the cell. The protein is UDP-3-O-acylglucosamine N-acyltransferase of Pseudomonas syringae pv. syringae (strain B728a).